Here is an 81-residue protein sequence, read N- to C-terminus: Small ribosomal subunit protein eS21 (81 aa).

Belongs to the eukaryotic ribosomal protein eS21 family. In terms of assembly, component of the 40S small ribosomal subunit.

It localises to the cytoplasm. Its subcellular location is the cytosol. It is found in the rough endoplasmic reticulum. Component of the small ribosomal subunit. The ribosome is a large ribonucleoprotein complex responsible for the synthesis of proteins in the cell. The polypeptide is Small ribosomal subunit protein eS21 (rps21) (Danio rerio (Zebrafish)).